A 447-amino-acid polypeptide reads, in one-letter code: Probable 7-dehydrocholesterol reductase (447 aa).

8 helical membrane passes run Leu-24 to Thr-44, Ile-71 to Ile-91, Phe-102 to Tyr-124, Ile-133 to Ile-153, Trp-157 to Phe-177, Tyr-244 to Phe-264, Phe-281 to Ala-301, and Ile-309 to Ile-329. NADP(+)-binding positions include Lys-337, Arg-341, Ile-367, Trp-372, and Asn-379–Tyr-380. The helical transmembrane segment at Ala-393–Val-413 threads the bilayer. NADP(+) is bound by residues Asp-419, Cys-423–Tyr-427, and Tyr-434.

The protein belongs to the ERG4/ERG24 family.

The protein resides in the membrane. The enzyme catalyses cholesterol + NADP(+) = 7-dehydrocholesterol + NADPH + H(+). Its pathway is steroid biosynthesis; cholesterol biosynthesis. Its function is as follows. Catalyzes the last step of the cholesterol synthesis pathway, which transforms cholesta-5,7-dien-3beta-ol (7-dehydrocholesterol,7-DHC) into cholesterol by reducing the C7-C8 double bond of its sterol core. The chain is Probable 7-dehydrocholesterol reductase (DHCR7) from Acanthamoeba polyphaga (Amoeba).